The following is a 288-amino-acid chain: tRNA dimethylallyltransferase (288 aa).

Position 17 to 24 (17 to 24 (GPTASGKS)) interacts with ATP. 19–24 (TASGKS) provides a ligand contact to substrate.

Belongs to the IPP transferase family. As to quaternary structure, monomer. Requires Mg(2+) as cofactor.

The catalysed reaction is adenosine(37) in tRNA + dimethylallyl diphosphate = N(6)-dimethylallyladenosine(37) in tRNA + diphosphate. Catalyzes the transfer of a dimethylallyl group onto the adenine at position 37 in tRNAs that read codons beginning with uridine, leading to the formation of N6-(dimethylallyl)adenosine (i(6)A). This Ruegeria sp. (strain TM1040) (Silicibacter sp.) protein is tRNA dimethylallyltransferase.